A 393-amino-acid polypeptide reads, in one-letter code: Elongation factor Tu (393 aa).

The 194-residue stretch at 10–203 (KPHVNIGTIG…AVDDYIPEPV (194 aa)) folds into the tr-type G domain. Residues 19–26 (GHVDHGKT) are G1. Residue 19–26 (GHVDHGKT) participates in GTP binding. Mg(2+) is bound at residue threonine 26. The tract at residues 60–64 (GITIS) is G2. Residues 81-84 (DCPG) are G3. GTP is bound by residues 81-85 (DCPGH) and 136-139 (NKVD). The interval 136 to 139 (NKVD) is G4. The segment at 173 to 175 (SAL) is G5.

The protein belongs to the TRAFAC class translation factor GTPase superfamily. Classic translation factor GTPase family. EF-Tu/EF-1A subfamily. In terms of assembly, monomer.

It is found in the cytoplasm. The catalysed reaction is GTP + H2O = GDP + phosphate + H(+). Its function is as follows. GTP hydrolase that promotes the GTP-dependent binding of aminoacyl-tRNA to the A-site of ribosomes during protein biosynthesis. This is Elongation factor Tu from Chlorobium phaeobacteroides (strain BS1).